The following is a 124-amino-acid chain: Fluoride-specific ion channel FluC 1 (124 aa).

The next 4 helical transmembrane spans lie at 7–27 (IQSK…LGAI), 32–52 (LNNY…IVGL), 58–78 (IQFF…GWIL), and 93–113 (AGLI…TFWI). Residues glycine 68 and threonine 71 each contribute to the Na(+) site.

Belongs to the fluoride channel Fluc/FEX (TC 1.A.43) family.

Its subcellular location is the cell inner membrane. The enzyme catalyses fluoride(in) = fluoride(out). Its activity is regulated as follows. Na(+) is not transported, but it plays an essential structural role and its presence is essential for fluoride channel function. Fluoride-specific ion channel. Important for reducing fluoride concentration in the cell, thus reducing its toxicity. This is Fluoride-specific ion channel FluC 1 from Prochlorococcus marinus (strain SARG / CCMP1375 / SS120).